Reading from the N-terminus, the 246-residue chain is Bacteriorhodopsin-II-like protein (246 aa).

A run of 7 helical transmembrane segments spans residues 7–27 (EATWLWIGTIGMVLGTVYFAV), 45–65 (TLIPAIAAAAYLAMATGLGVI), 82–102 (YADWLLTTPLLIIDLALVAGA), 107–127 (LYKLIIIDAIMILGGLAGSMM), 135–155 (IVWWAVSTAAFIILLYYLLGE), 182–202 (WALYPIVWILGTGGGFGIIAV), and 205–225 (EIMLYVMLDIGTKIGFGAVLL). Lysine 217 is subject to N6-(retinylidene)lysine.

The protein belongs to the archaeal/bacterial/fungal opsin family. The covalent binding of retinal to the apoprotein, bacterioopsin, generates bacteriorhodopsin.

The protein resides in the cell membrane. Its function is as follows. Has no proton-pumping activity but is potentially capable of functioning as a sensory SRII-like protein. The chromophore contains 36.5% all-trans-, 7.6% 11-cis- and 56.4% 13-cis-retinal in the dark and 30.1% 11-cis- and 47.7% 13-cis-retinal upon illumination with &gt;460 nm light. This is Bacteriorhodopsin-II-like protein (bop2) from Haloquadratum walsbyi (strain DSM 16790 / HBSQ001).